Reading from the N-terminus, the 204-residue chain is Leucyl/phenylalanyl-tRNA--protein transferase (204 aa).

Belongs to the L/F-transferase family.

Its subcellular location is the cytoplasm. The catalysed reaction is N-terminal L-lysyl-[protein] + L-leucyl-tRNA(Leu) = N-terminal L-leucyl-L-lysyl-[protein] + tRNA(Leu) + H(+). The enzyme catalyses N-terminal L-arginyl-[protein] + L-leucyl-tRNA(Leu) = N-terminal L-leucyl-L-arginyl-[protein] + tRNA(Leu) + H(+). It carries out the reaction L-phenylalanyl-tRNA(Phe) + an N-terminal L-alpha-aminoacyl-[protein] = an N-terminal L-phenylalanyl-L-alpha-aminoacyl-[protein] + tRNA(Phe). In terms of biological role, functions in the N-end rule pathway of protein degradation where it conjugates Leu, Phe and, less efficiently, Met from aminoacyl-tRNAs to the N-termini of proteins containing an N-terminal arginine or lysine. The sequence is that of Leucyl/phenylalanyl-tRNA--protein transferase from Brucella melitensis biotype 2 (strain ATCC 23457).